The following is a 145-amino-acid chain: Large ribosomal subunit protein uL11m (145 aa).

Belongs to the universal ribosomal protein uL11 family.

The protein localises to the mitochondrion. The polypeptide is Large ribosomal subunit protein uL11m (RPL11) (Reclinomonas americana).